The sequence spans 626 residues: Procollagen galactosyltransferase 2 (626 aa).

Positions Met-1–Ala-27 are cleaved as a signal peptide. N-linked (GlcNAc...) asparagine glycans are attached at residues Asn-97, Asn-185, Asn-382, and Asn-580. A disordered region spans residues Asn-604 to Leu-626. Residues Arg-623–Leu-626 carry the Prevents secretion from ER motif.

Belongs to the glycosyltransferase 25 family. Expressed in brain and skeletal muscle.

Its subcellular location is the endoplasmic reticulum lumen. The enzyme catalyses (5R)-5-hydroxy-L-lysyl-[collagen] + UDP-alpha-D-galactose = (5R)-5-O-(beta-D-galactosyl)-5-hydroxy-L-lysyl-[collagen] + UDP + H(+). Its function is as follows. Beta-galactosyltransferase that transfers beta-galactose to hydroxylysine residues of collagen. The sequence is that of Procollagen galactosyltransferase 2 (COLGALT2) from Homo sapiens (Human).